A 100-amino-acid polypeptide reads, in one-letter code: Urease subunit gamma (100 aa).

The protein belongs to the urease gamma subunit family. As to quaternary structure, heterotrimer of UreA (gamma), UreB (beta) and UreC (alpha) subunits. Three heterotrimers associate to form the active enzyme.

It localises to the cytoplasm. It catalyses the reaction urea + 2 H2O + H(+) = hydrogencarbonate + 2 NH4(+). The protein operates within nitrogen metabolism; urea degradation; CO(2) and NH(3) from urea (urease route): step 1/1. The chain is Urease subunit gamma from Hahella chejuensis (strain KCTC 2396).